The chain runs to 138 residues: Large ribosomal subunit protein uL16 (138 aa).

The protein belongs to the universal ribosomal protein uL16 family. In terms of assembly, part of the 50S ribosomal subunit.

Functionally, binds 23S rRNA and is also seen to make contacts with the A and possibly P site tRNAs. This Ureaplasma parvum serovar 3 (strain ATCC 27815 / 27 / NCTC 11736) protein is Large ribosomal subunit protein uL16.